The following is a 1524-amino-acid chain: DNA-directed RNA polymerase subunit beta' (1524 aa).

Zn(2+) is bound by residues Cys-58, Cys-60, Cys-73, and Cys-76. Residues Asp-739, Asp-741, and Asp-743 each contribute to the Mg(2+) site. 4 residues coordinate Zn(2+): Cys-1112, Cys-1194, Cys-1201, and Cys-1204. The disordered stretch occupies residues 1502–1524 (AVEAKEKEAPRRPVRREQPGKGL).

This sequence belongs to the RNA polymerase beta' chain family. The RNAP catalytic core consists of 2 alpha, 1 beta, 1 beta' and 1 omega subunit. When a sigma factor is associated with the core the holoenzyme is formed, which can initiate transcription. Requires Mg(2+) as cofactor. It depends on Zn(2+) as a cofactor.

It catalyses the reaction RNA(n) + a ribonucleoside 5'-triphosphate = RNA(n+1) + diphosphate. DNA-dependent RNA polymerase catalyzes the transcription of DNA into RNA using the four ribonucleoside triphosphates as substrates. The protein is DNA-directed RNA polymerase subunit beta' of Thermus aquaticus.